A 122-amino-acid chain; its full sequence is Large ribosomal subunit protein uL29A (122 aa).

Positions 10 to 69 (QLGIKQIEERAAEIKADLAALRQKKNSGDVGANDIKTAKKNLARALTVRREKILEELVEA) form a coiled coil.

It belongs to the universal ribosomal protein uL29 family. In terms of assembly, component of the large ribosomal subunit.

It is found in the cytoplasm. The protein is Large ribosomal subunit protein uL29A (RPL35A) of Encephalitozoon cuniculi (strain GB-M1) (Microsporidian parasite).